The following is a 461-amino-acid chain: High-affinity Na(+)/H(+) antiporter NhaS3 (461 aa).

A run of 11 helical transmembrane segments spans residues 22–42, 58–78, 113–133, 148–170, 175–197, 209–229, 239–259, 280–300, 360–380, 391–411, and 424–444; these read TEIA…IYFA, VLGE…LLLF, SEVI…EIGL, AIVA…MTIF, IPAI…KVLA, IIIG…AVVG, ISNI…SILI, LLLV…IVQL, GLII…VTGF, LAIG…AGVG, and AIIV…RAVF.

It belongs to the monovalent cation:proton antiporter 2 (CPA2) transporter (TC 2.A.37) family.

The protein resides in the cellular thylakoid membrane. Its function is as follows. Na(+)/H(+) antiporter that transports sodium from the cytoplasm into the thylakoid lumen in exchange for protons. Contributes to sodium homeostasis and tolerance. Also has Li(+)/H(+) antiport activity under K(+)-free conditions, but not under K(+)-rich conditions. This is High-affinity Na(+)/H(+) antiporter NhaS3 (nhaS3) from Synechocystis sp. (strain ATCC 27184 / PCC 6803 / Kazusa).